A 287-amino-acid chain; its full sequence is Small ribosomal subunit biogenesis GTPase RsgA (287 aa).

A CP-type G domain is found at 61–218 (ISQLKRPAVA…MVDTPGFSSL (158 aa)). Residues 110 to 113 (NKLD) and 161 to 169 (GPSGVGKST) contribute to the GTP site. Residues Cys-242, Cys-247, His-249, and Cys-255 each coordinate Zn(2+).

Belongs to the TRAFAC class YlqF/YawG GTPase family. RsgA subfamily. As to quaternary structure, monomer. Associates with 30S ribosomal subunit, binds 16S rRNA. Zn(2+) is required as a cofactor.

It localises to the cytoplasm. Functionally, one of several proteins that assist in the late maturation steps of the functional core of the 30S ribosomal subunit. Helps release RbfA from mature subunits. May play a role in the assembly of ribosomal proteins into the subunit. Circularly permuted GTPase that catalyzes slow GTP hydrolysis, GTPase activity is stimulated by the 30S ribosomal subunit. In Clostridium kluyveri (strain NBRC 12016), this protein is Small ribosomal subunit biogenesis GTPase RsgA.